An 843-amino-acid chain; its full sequence is Tetratricopeptide repeat protein 7B (843 aa).

A TPR 1 repeat occupies 97-131; sequence QESNLIMAKLNYVEGDYKEALNIYARVGLDDLPLT. Phosphoserine occurs at positions 160 and 202. TPR repeat units lie at residues 219–252, 363–396, 397–430, 479–514, 516–548, and 549–582; these read ETGL…VETR, SVVY…AFEE, FHLW…KPDD, TYSL…SPTD, QAAF…QGDD, and ANSL…YPEN. Phosphoserine is present on residues Ser625, Ser629, Ser630, Ser673, Ser677, Ser678, and Ser681. 4 TPR repeats span residues 696 to 729, 730 to 763, 765 to 797, and 798 to 831; these read AQIW…FPMS, HNVL…SPTH, KSMQ…NSTA, and HEVW…EASS.

In terms of assembly, component of a phosphatidylinositol 4-kinase (PI4K) complex, composed of PI4KA, EFR3 (EFR3A or EFR3B), TTC7 (TTC7A or TTC7B) and HYCC (HYCC1 or HYCC2). Interacts with PI4KA, interaction is direct. Interacts with EFR3 (EFR3A or EFR3B), interaction is direct. Interacts with HYCC (HYCC1 or HYCC2), interaction is direct. Association with the PI4K complex is strongly reduced by TMEM150A.

The protein localises to the cytoplasm. The protein resides in the cytosol. It localises to the cell membrane. In terms of biological role, component of a complex required to localize phosphatidylinositol 4-kinase (PI4K) to the plasma membrane. The complex acts as a regulator of phosphatidylinositol 4-phosphate (PtdIns(4)P) synthesis. In the complex, plays a central role in bridging PI4KA to EFR3B and HYCC1, via direct interactions. The sequence is that of Tetratricopeptide repeat protein 7B (TTC7B) from Homo sapiens (Human).